The following is a 134-amino-acid chain: Protein X (134 aa).

Positions 25-48 (SRGRPVSGPFGPLPSPSSSAVPAD) are disordered. A compositionally biased stretch (low complexity) spans 29–47 (PVSGPFGPLPSPSSSAVPA). The segment at 68–117 (PCALRLTSARRMETTVNAHQVLPKVLHKRTLGLSAMSTTDLEAYFKDCLF) is mitochondrial targeting sequence.

The protein belongs to the orthohepadnavirus protein X family. In terms of assembly, may form homodimer. May interact with host CEBPA, CFLAR, CREB1, DDB1, E4F1, HBXIP, HSPD1/HSP60, NFKBIA, POLR2E and SMAD4. Interacts with host SMC5-SMC6 complex and induces its degradation. Interacts with host TRPC4AP; leading to prevent ubiquitination of TRPC4AP. Interacts with host PLSCR1; this interaction promotes ubiquitination and degradation of HBx and impairs HBx-mediated cell proliferation. Post-translationally, a fraction may be phosphorylated in insect cells and HepG2 cells, a human hepatoblastoma cell line. Phosphorylated in vitro by host protein kinase C or mitogen-activated protein kinase. N-acetylated in insect cells.

The protein resides in the host cytoplasm. The protein localises to the host nucleus. It localises to the host mitochondrion. In terms of biological role, multifunctional protein that plays a role in silencing host antiviral defenses and promoting viral transcription. Does not seem to be essential for HBV infection. May be directly involved in development of cirrhosis and liver cancer (hepatocellular carcinoma). Most of cytosolic activities involve modulation of cytosolic calcium. The effect on apoptosis is controversial depending on the cell types in which the studies have been conducted. May induce apoptosis by localizing in mitochondria and causing loss of mitochondrial membrane potential. May also modulate apoptosis by binding host CFLAR, a key regulator of the death-inducing signaling complex (DISC). Promotes viral transcription by using the host E3 ubiquitin ligase DDB1 to target the SMC5-SMC6 complex to proteasomal degradation. This host complex would otherwise bind to viral episomal DNA, and prevents its transcription. Moderately stimulates transcription of many different viral and cellular transcription elements. Promoters and enhancers stimulated by HBx contain DNA binding sites for NF-kappa-B, AP-1, AP-2, c-EBP, ATF/CREB, or the calcium-activated factor NF-AT. The protein is Protein X of Homo sapiens (Human).